The primary structure comprises 270 residues: Glutamate racemase (270 aa).

Substrate-binding positions include 10 to 11 and 42 to 43; these read DS and YG. Catalysis depends on Cys-74, which acts as the Proton donor/acceptor. Position 75-76 (75-76) interacts with substrate; that stretch reads NT. Cys-189 acts as the Proton donor/acceptor in catalysis. 190 to 191 contributes to the substrate binding site; sequence TH.

The protein belongs to the aspartate/glutamate racemases family.

The catalysed reaction is L-glutamate = D-glutamate. It participates in cell wall biogenesis; peptidoglycan biosynthesis. Provides the (R)-glutamate required for cell wall biosynthesis. The sequence is that of Glutamate racemase from Bartonella henselae (strain ATCC 49882 / DSM 28221 / CCUG 30454 / Houston 1) (Rochalimaea henselae).